The primary structure comprises 355 residues: Protein-glutamate methylesterase/protein-glutamine glutaminase 3 (355 aa).

Residues 5 to 122 (KVLIVDDSAV…KQFLEESRVR (118 aa)) enclose the Response regulatory domain. D56 is subject to 4-aspartylphosphate. The CheB-type methylesterase domain maps to 165-355 (IQTTEKVVVV…IAREVLRLCG (191 aa)). Catalysis depends on residues S177, H203, and D299.

The protein belongs to the CheB family. Phosphorylated by CheA. Phosphorylation of the N-terminal regulatory domain activates the methylesterase activity.

The protein resides in the cytoplasm. It carries out the reaction [protein]-L-glutamate 5-O-methyl ester + H2O = L-glutamyl-[protein] + methanol + H(+). The catalysed reaction is L-glutaminyl-[protein] + H2O = L-glutamyl-[protein] + NH4(+). In terms of biological role, involved in chemotaxis. Part of a chemotaxis signal transduction system that modulates chemotaxis in response to various stimuli. Catalyzes the demethylation of specific methylglutamate residues introduced into the chemoreceptors (methyl-accepting chemotaxis proteins or MCP) by CheR. Also mediates the irreversible deamidation of specific glutamine residues to glutamic acid. The polypeptide is Protein-glutamate methylesterase/protein-glutamine glutaminase 3 (Geobacter metallireducens (strain ATCC 53774 / DSM 7210 / GS-15)).